A 101-amino-acid polypeptide reads, in one-letter code: NAD(P)H-quinone oxidoreductase subunit 4L, chloroplastic (101 aa).

3 helical membrane-spanning segments follow: residues 2 to 22 (ILDSLLILAASVFCIGIYGLI), 32 to 52 (MSLELLLNAVNINFVAFSNFI), and 64 to 84 (IFIMTIAAAEAAVGLALILAI).

The protein belongs to the complex I subunit 4L family. In terms of assembly, NDH is composed of at least 16 different subunits, 5 of which are encoded in the nucleus.

It localises to the plastid. Its subcellular location is the chloroplast thylakoid membrane. It carries out the reaction a plastoquinone + NADH + (n+1) H(+)(in) = a plastoquinol + NAD(+) + n H(+)(out). The enzyme catalyses a plastoquinone + NADPH + (n+1) H(+)(in) = a plastoquinol + NADP(+) + n H(+)(out). In terms of biological role, NDH shuttles electrons from NAD(P)H:plastoquinone, via FMN and iron-sulfur (Fe-S) centers, to quinones in the photosynthetic chain and possibly in a chloroplast respiratory chain. The immediate electron acceptor for the enzyme in this species is believed to be plastoquinone. Couples the redox reaction to proton translocation, and thus conserves the redox energy in a proton gradient. This chain is NAD(P)H-quinone oxidoreductase subunit 4L, chloroplastic, found in Chlorokybus atmophyticus (Soil alga).